The chain runs to 811 residues: Hypoxia-inducible factor 1-alpha (811 aa).

Residues 1-27 (MDSPGGVTDKKRISSERRKEKSRDAAR) form a disordered region. Residues 8-27 (TDKKRISSERRKEKSRDAAR) are compositionally biased toward basic and acidic residues. One can recognise a bHLH domain in the interval 17 to 70 (RRKEKSRDAARCRRSKESEVFYELAHQLPLPHTVSAHLDKASIMRLTISYLRMR). PAS domains are found at residues 80-157 (TEAN…PVKK) and 228-298 (PHPS…FTKG). The region spanning 302–345 (TGQYRMLAKQGGYVWVETQATVIYNTKNSQPQCIVCVNYVLSGI) is the PAC domain. Residues 401-587 (APAAGDTIIS…LSPLESSSSG (187 aa)) are ODD. A 4-hydroxyproline modification is found at Pro402. Residues 490–518 (PQVQEQPTSPSDASTSQSSPEPSSPNDYC) are disordered. The segment covering 496-514 (PTSPSDASTSQSSPEPSSP) has biased composition (low complexity). Residues 529–573 (FKLELVEKLFAIDTEAKNPFSTQETDLDLEMLAPYIPMDDDFQLR) form an NTAD region. Pro562 bears the 4-hydroxyproline mark. The interval 576 to 785 (DQLSPLESSS…GLPQLTSYDC (210 aa)) is ID. Over residues 634–652 (NDTSSAPASPYSGNRSRTA) the composition is skewed to polar residues. Residues 634–655 (NDTSSAPASPYSGNRSRTASPI) form a disordered region. Short sequence motifs (nuclear localization signal) lie at residues 703–706 (RKRK) and 718–721 (GIGS). The segment at 771–811 (SMDESGLPQLTSYDCEVNAPIQGNRNLLQGEELLRALDQVN) is CTAD. At Asn788 the chain carries (3S)-3-hydroxyasparagine.

Efficient DNA binding requires heterodimerization of an alpha and a beta/ARNT subunit. In normoxia, is hydroxylated on Pro-402 and Pro-562. The hydroxylated prolines promote interaction with VHL, initiating rapid ubiquitination and subsequent proteasomal degradation. Under hypoxia, proline hydroxylation is impaired and ubiquitination is attenuated, resulting in stabilization. In terms of processing, in normoxia, is hydroxylated on Asn-788, thus abrogating interaction with CREBBP and EP300 and preventing transcriptional activation. Post-translationally, the iron and 2-oxoglutarate dependent 3-hydroxylation of asparagine is (S) stereospecific within HIF CTAD domains.

The protein localises to the cytoplasm. It localises to the nucleus. Its subcellular location is the nucleus speckle. Its activity is regulated as follows. Induced by reactive oxygen species (ROS). In terms of biological role, functions as a master transcriptional regulator of the adaptive response to hypoxia. Under hypoxic conditions, activates the transcription of over 40 genes, including erythropoietin, glucose transporters, glycolytic enzymes, vascular endothelial growth factor, HILPDA, and other genes whose protein products increase oxygen delivery or facilitate metabolic adaptation to hypoxia. Plays an essential role in embryonic vascularization, tumor angiogenesis and pathophysiology of ischemic disease. The protein is Hypoxia-inducible factor 1-alpha (HIF1A) of Gallus gallus (Chicken).